Consider the following 162-residue polypeptide: Large ribosomal subunit protein uL15 (162 aa).

Basic and acidic residues predominate over residues 1 to 10 (MNLNELRDNA). The tract at residues 1-39 (MNLNELRDNAGSRYRKKRLGRGIGSGKGKTSGKGVKGQK) is disordered. Gly residues predominate over residues 21-35 (RGIGSGKGKTSGKGV).

The protein belongs to the universal ribosomal protein uL15 family. Part of the 50S ribosomal subunit.

Functionally, binds to the 23S rRNA. The chain is Large ribosomal subunit protein uL15 from Gluconacetobacter diazotrophicus (strain ATCC 49037 / DSM 5601 / CCUG 37298 / CIP 103539 / LMG 7603 / PAl5).